A 181-amino-acid polypeptide reads, in one-letter code: Ribosome maturation factor RimM (181 aa).

The region spanning 97–170 (AGEFWLPDLM…RIEVVAIPGL (74 aa)) is the PRC barrel domain.

Belongs to the RimM family. In terms of assembly, binds ribosomal protein uS19.

The protein localises to the cytoplasm. Functionally, an accessory protein needed during the final step in the assembly of 30S ribosomal subunit, possibly for assembly of the head region. Essential for efficient processing of 16S rRNA. May be needed both before and after RbfA during the maturation of 16S rRNA. It has affinity for free ribosomal 30S subunits but not for 70S ribosomes. This is Ribosome maturation factor RimM from Gloeobacter violaceus (strain ATCC 29082 / PCC 7421).